We begin with the raw amino-acid sequence, 475 residues long: Ribulose bisphosphate carboxylase large chain (475 aa).

The propeptide occupies 1–2 (MS). At proline 3 the chain carries N-acetylproline. Lysine 14 is subject to N6,N6,N6-trimethyllysine. 2 residues coordinate substrate: asparagine 123 and threonine 173. Lysine 175 acts as the Proton acceptor in catalysis. Residue lysine 177 participates in substrate binding. Lysine 201, aspartate 203, and glutamate 204 together coordinate Mg(2+). The residue at position 201 (lysine 201) is an N6-carboxylysine. The active-site Proton acceptor is the histidine 294. Substrate-binding residues include arginine 295, histidine 327, and serine 379.

This sequence belongs to the RuBisCO large chain family. Type I subfamily. Heterohexadecamer of 8 large chains and 8 small chains; disulfide-linked. The disulfide link is formed within the large subunit homodimers. Requires Mg(2+) as cofactor. Post-translationally, the disulfide bond which can form in the large chain dimeric partners within the hexadecamer appears to be associated with oxidative stress and protein turnover.

The protein localises to the plastid. It localises to the chloroplast. The catalysed reaction is 2 (2R)-3-phosphoglycerate + 2 H(+) = D-ribulose 1,5-bisphosphate + CO2 + H2O. It catalyses the reaction D-ribulose 1,5-bisphosphate + O2 = 2-phosphoglycolate + (2R)-3-phosphoglycerate + 2 H(+). RuBisCO catalyzes two reactions: the carboxylation of D-ribulose 1,5-bisphosphate, the primary event in carbon dioxide fixation, as well as the oxidative fragmentation of the pentose substrate in the photorespiration process. Both reactions occur simultaneously and in competition at the same active site. The sequence is that of Ribulose bisphosphate carboxylase large chain from Bouvardia ternifolia (Firecrackerbush).